A 421-amino-acid polypeptide reads, in one-letter code: Solute carrier family 35 member F3 (421 aa).

The disordered stretch occupies residues 25–45 (EGEERPRDSPGPAEAQAPAGV). A run of 10 helical transmembrane segments spans residues 66–86 (IFWGVAVVLCVCSSWAGSTQL), 98–118 (FTLTWFATNWNFLFFPLYYVG), 149–169 (VFFTKAAPFGVLWTLTNYLYL), 179–199 (DVSVLFCCNKAFVFLLSWIVL), 208–228 (IVAAILAIAGIVMMTYADGFH), 232–252 (VIGIALVVASASMSALYKVLF), 266–286 (LFLSILGVFNILFITCIPIIL), 305–325 (LCGFSVLLLTFNIVLNFGIAV), 326–346 (TYPTLMSLGIVLSIPVNAVID), and 352–372 (IVFNGVRVIAIIIIGLGFLLL). The tract at residues 393 to 421 (KKEEPAEGAADLSSGPQSKNRRARPSFAR) is disordered. The segment covering 411–421 (KNRRARPSFAR) has biased composition (basic residues).

Belongs to the SLC35F solute transporter family. As to expression, expressed at the highest levels in the adult cerebellum.

The protein resides in the membrane. The enzyme catalyses thiamine(in) = thiamine(out). In terms of biological role, mediates thiamine transport. This Homo sapiens (Human) protein is Solute carrier family 35 member F3.